A 346-amino-acid chain; its full sequence is Sensor histidine kinase GraS (346 aa).

The next 2 helical transmembrane spans lie at 15-35 (MNWI…SLID) and 43-63 (LFYI…LTYF). Residues 126–332 (EFVHDIKTPV…TVRLIFPLQN (207 aa)) enclose the Histidine kinase domain.

Interacts with GraX.

It is found in the cell membrane. The enzyme catalyses ATP + protein L-histidine = ADP + protein N-phospho-L-histidine.. Functionally, member of the two-component regulatory system GraR/GraS involved in resistance against cationic antimicrobial peptides (CAMPs). Functions as a sensor protein kinase which phosphorylates GraR through the auxiliary protein GraX. In turn, GraR up-regulates many genes such as adhesins, exoproteins, transporters, toxins, and proteins involved in cell wall synthesis. Down-regulates the expression of many genes involved in RNA and amino acid synthesis or glycolysis. The chain is Sensor histidine kinase GraS (graS) from Staphylococcus aureus (strain COL).